Consider the following 308-residue polypeptide: Transaldolase (308 aa).

Lysine 125 functions as the Schiff-base intermediate with substrate in the catalytic mechanism.

The protein belongs to the transaldolase family. Type 1 subfamily. In terms of assembly, homodimer.

It is found in the cytoplasm. It carries out the reaction D-sedoheptulose 7-phosphate + D-glyceraldehyde 3-phosphate = D-erythrose 4-phosphate + beta-D-fructose 6-phosphate. It participates in carbohydrate degradation; pentose phosphate pathway; D-glyceraldehyde 3-phosphate and beta-D-fructose 6-phosphate from D-ribose 5-phosphate and D-xylulose 5-phosphate (non-oxidative stage): step 2/3. In terms of biological role, transaldolase is important for the balance of metabolites in the pentose-phosphate pathway. This chain is Transaldolase, found in Pseudomonas putida (strain GB-1).